Here is a 303-residue protein sequence, read N- to C-terminus: Monoglyceride lipase (303 aa).

Threonine 10 bears the Phosphothreonine mark. The residue at position 58 (tyrosine 58) is a 3'-nitrotyrosine. Serine 122 (nucleophile) is an active-site residue. Residue serine 189 is modified to Phosphoserine. Catalysis depends on charge relay system residues aspartate 239 and histidine 269.

Belongs to the AB hydrolase superfamily. Monoacylglycerol lipase family. In terms of assembly, homodimer. Ubiquitous.

It localises to the cytoplasm. The protein resides in the cytosol. The protein localises to the membrane. It carries out the reaction Hydrolyzes glycerol monoesters of long-chain fatty acids.. The enzyme catalyses a 1-acylglycerol + H2O = glycerol + a fatty acid + H(+). The catalysed reaction is a 2-acylglycerol + H2O = glycerol + a fatty acid + H(+). It catalyses the reaction 2-(5Z,8Z,11Z,14Z-eicosatetraenoyl)-glycerol + H2O = glycerol + (5Z,8Z,11Z,14Z)-eicosatetraenoate + H(+). It carries out the reaction 1-octanoylglycerol + H2O = octanoate + glycerol + H(+). The enzyme catalyses 1-decanoylglycerol + H2O = decanoate + glycerol + H(+). The catalysed reaction is 1-dodecanoylglycerol + H2O = dodecanoate + glycerol + H(+). It catalyses the reaction 1-tetradecanoylglycerol + H2O = tetradecanoate + glycerol + H(+). It carries out the reaction 2-hexadecanoylglycerol + H2O = glycerol + hexadecanoate + H(+). The enzyme catalyses 1-(9Z-octadecenoyl)-glycerol + H2O = glycerol + (9Z)-octadecenoate + H(+). The catalysed reaction is 2-(9Z-octadecenoyl)-glycerol + H2O = glycerol + (9Z)-octadecenoate + H(+). It catalyses the reaction 2-(9Z,12Z-octadecadienoyl)-glycerol + H2O = (9Z,12Z)-octadecadienoate + glycerol + H(+). It carries out the reaction 1-(5Z,8Z,11Z,14Z-eicosatetraenoyl)-glycerol + H2O = glycerol + (5Z,8Z,11Z,14Z)-eicosatetraenoate + H(+). The enzyme catalyses 1-(9Z,12Z-octadecadienoyl)-glycerol + H2O = (9Z,12Z)-octadecadienoate + glycerol + H(+). The catalysed reaction is 1-hexadecanoylglycerol + H2O = glycerol + hexadecanoate + H(+). It catalyses the reaction 1-octadecanoylglycerol + H2O = octadecanoate + glycerol + H(+). It carries out the reaction prostaglandin E2 1-glyceryl ester + H2O = prostaglandin E2 + glycerol + H(+). The enzyme catalyses prostaglandin D2-1-glycerol ester + H2O = prostaglandin D2 + glycerol + H(+). The catalysed reaction is 2-glyceryl-15-deoxy-Delta(12,14)-prostaglandin J2 + H2O = 15-deoxy-Delta(12,14)-prostaglandin J2 + glycerol + H(+). It catalyses the reaction prostaglandin F2alpha 1-glyceryl ester + H2O = prostaglandin F2alpha + glycerol + H(+). The protein operates within glycerolipid metabolism; triacylglycerol degradation. Functionally, converts monoacylglycerides to free fatty acids and glycerol. Hydrolyzes the endocannabinoid 2-arachidonoylglycerol, and thereby contributes to the regulation of endocannabinoid signaling, nociperception and perception of pain. Regulates the levels of fatty acids that serve as signaling molecules and promote cancer cell migration, invasion and tumor growth. This chain is Monoglyceride lipase, found in Mus musculus (Mouse).